The primary structure comprises 1595 residues: Pentafunctional AROM polypeptide (1595 aa).

The tract at residues 1–384 is 3-dehydroquinate synthase; the sequence is MGVPTKISIL…HEPRASTVSN (384 aa). NAD(+) contacts are provided by residues 44 to 46, 81 to 84, 114 to 116, and aspartate 119; these read DTN, ESSK, and GGV. Arginine 130 contributes to the 7-phospho-2-dehydro-3-deoxy-D-arabino-heptonate binding site. 139–140 serves as a coordination point for NAD(+); it reads TT. The 7-phospho-2-dehydro-3-deoxy-D-arabino-heptonate site is built by aspartate 146 and lysine 152. NAD(+) is bound at residue lysine 161. Asparagine 162 lines the 7-phospho-2-dehydro-3-deoxy-D-arabino-heptonate pocket. NAD(+) is bound by residues 179-182 and asparagine 190; that span reads FLNT. Glutamate 194 lines the Zn(2+) pocket. 7-phospho-2-dehydro-3-deoxy-D-arabino-heptonate contacts are provided by residues 194 to 197 and lysine 250; that span reads EVIK. Residue glutamate 260 is the Proton acceptor; for 3-dehydroquinate synthase activity of the active site. Residues 264-268 and histidine 271 contribute to the 7-phospho-2-dehydro-3-deoxy-D-arabino-heptonate site; that span reads RNLLN. Residue histidine 271 participates in Zn(2+) binding. Histidine 275 (proton acceptor; for 3-dehydroquinate synthase activity) is an active-site residue. Histidine 287 and lysine 356 together coordinate 7-phospho-2-dehydro-3-deoxy-D-arabino-heptonate. Histidine 287 serves as a coordination point for Zn(2+). Residues 397-842 form an EPSP synthase region; that stretch reads VSPGVPKGLD…WDSLAQTFKV (446 aa). Residue cysteine 824 is the For EPSP synthase activity of the active site. Residues 866–1057 are shikimate kinase; the sequence is ASIFIIGMRG…RRKENTFFVS (192 aa). 872 to 879 provides a ligand contact to ATP; that stretch reads GMRGAGKT. The interval 1058 to 1278 is 3-dehydroquinase; the sequence is LTLPDLGLAA…AAPGQLSARE (221 aa). The Proton acceptor; for 3-dehydroquinate dehydratase activity role is filled by histidine 1181. The Schiff-base intermediate with substrate; for 3-dehydroquinate dehydratase activity role is filled by lysine 1209. The shikimate dehydrogenase stretch occupies residues 1291 to 1595; it reads AKKFAVIGNP…MGVLPSEDIS (305 aa).

It in the N-terminal section; belongs to the sugar phosphate cyclases superfamily. Dehydroquinate synthase family. The protein in the 2nd section; belongs to the EPSP synthase family. In the 3rd section; belongs to the shikimate kinase family. This sequence in the 4th section; belongs to the type-I 3-dehydroquinase family. It in the C-terminal section; belongs to the shikimate dehydrogenase family. As to quaternary structure, homodimer. Requires Zn(2+) as cofactor.

The protein localises to the cytoplasm. The enzyme catalyses 7-phospho-2-dehydro-3-deoxy-D-arabino-heptonate = 3-dehydroquinate + phosphate. It catalyses the reaction 3-dehydroquinate = 3-dehydroshikimate + H2O. It carries out the reaction shikimate + NADP(+) = 3-dehydroshikimate + NADPH + H(+). The catalysed reaction is shikimate + ATP = 3-phosphoshikimate + ADP + H(+). The enzyme catalyses 3-phosphoshikimate + phosphoenolpyruvate = 5-O-(1-carboxyvinyl)-3-phosphoshikimate + phosphate. The protein operates within metabolic intermediate biosynthesis; chorismate biosynthesis; chorismate from D-erythrose 4-phosphate and phosphoenolpyruvate: step 2/7. Its pathway is metabolic intermediate biosynthesis; chorismate biosynthesis; chorismate from D-erythrose 4-phosphate and phosphoenolpyruvate: step 3/7. It participates in metabolic intermediate biosynthesis; chorismate biosynthesis; chorismate from D-erythrose 4-phosphate and phosphoenolpyruvate: step 4/7. It functions in the pathway metabolic intermediate biosynthesis; chorismate biosynthesis; chorismate from D-erythrose 4-phosphate and phosphoenolpyruvate: step 5/7. The protein operates within metabolic intermediate biosynthesis; chorismate biosynthesis; chorismate from D-erythrose 4-phosphate and phosphoenolpyruvate: step 6/7. Its function is as follows. The AROM polypeptide catalyzes 5 consecutive enzymatic reactions in prechorismate polyaromatic amino acid biosynthesis. In Ajellomyces capsulatus (strain H143) (Darling's disease fungus), this protein is Pentafunctional AROM polypeptide.